The primary structure comprises 360 residues: Ribosomal RNA large subunit methyltransferase F (360 aa).

Positions 1–36 (MSKLISKQGKRPALSQSGLAKPSTSKKSSASKNANT) are disordered. Over residues 23–36 (STSKKSSASKNANT) the composition is skewed to low complexity.

This sequence belongs to the methyltransferase superfamily. METTL16/RlmF family.

It localises to the cytoplasm. It carries out the reaction adenosine(1618) in 23S rRNA + S-adenosyl-L-methionine = N(6)-methyladenosine(1618) in 23S rRNA + S-adenosyl-L-homocysteine + H(+). In terms of biological role, specifically methylates the adenine in position 1618 of 23S rRNA. The chain is Ribosomal RNA large subunit methyltransferase F from Shewanella denitrificans (strain OS217 / ATCC BAA-1090 / DSM 15013).